Consider the following 264-residue polypeptide: Sexual differentiation protein ste4 (264 aa).

The region spanning 11–73 (WNNEAVCNWI…LSAIQSMKKQ (63 aa)) is the SAM domain. The tract at residues 111–139 (LEKRVEYLETENTKLVKTLNSLNSEFLQL) is leucine-zipper. The Ras-associating domain maps to 176–264 (GSFDLEVNDS…PSFVLSRRSC (89 aa)).

As to quaternary structure, homodimer or heterodimer with another leucine-zipper protein.

In terms of biological role, essential for mating and meiosis. This Schizosaccharomyces pombe (strain 972 / ATCC 24843) (Fission yeast) protein is Sexual differentiation protein ste4 (ste4).